Consider the following 233-residue polypeptide: Ribosome-recycling factor, mitochondrial (233 aa).

It belongs to the RRF family.

The protein resides in the mitochondrion. In terms of biological role, necessary for protein synthesis in mitochondria. Functions as a ribosome recycling factor in mitochondria. The chain is Ribosome-recycling factor, mitochondrial (RRF1) from Candida glabrata (strain ATCC 2001 / BCRC 20586 / JCM 3761 / NBRC 0622 / NRRL Y-65 / CBS 138) (Yeast).